The primary structure comprises 359 residues: Alanine racemase, biosynthetic (359 aa).

Catalysis depends on Lys-34, which acts as the Proton acceptor; specific for D-alanine. Lys-34 is modified (N6-(pyridoxal phosphate)lysine). Arg-129 is a substrate binding site. Residue Tyr-255 is the Proton acceptor; specific for L-alanine of the active site. A substrate-binding site is contributed by Met-303.

Belongs to the alanine racemase family. Pyridoxal 5'-phosphate is required as a cofactor.

It carries out the reaction L-alanine = D-alanine. The protein operates within amino-acid biosynthesis; D-alanine biosynthesis; D-alanine from L-alanine: step 1/1. It participates in cell wall biogenesis; peptidoglycan biosynthesis. In terms of biological role, catalyzes the interconversion of L-alanine and D-alanine. Provides the D-alanine required for cell wall biosynthesis. The protein is Alanine racemase, biosynthetic (alr) of Escherichia coli O6:H1 (strain CFT073 / ATCC 700928 / UPEC).